A 534-amino-acid chain; its full sequence is Kelch repeat and BTB domain-containing protein 4 (534 aa).

Residues 1–25 (MKGGNADSWQREKLASMESPEEPGA) are disordered. A BTB domain is found at 61–128 (ADVTISVEGR…IYHGTVKLRA (68 aa)). The BACK domain maps to 163–255 (CLQVMWLADR…SLKEIGENVH (93 aa)). Kelch repeat units lie at residues 255–301 (HIYL…KHGG), 302–344 (DLYV…SVPG), 347–394 (AIYS…NLNG), 396–446 (IYLL…VHKD), and 448–497 (VFIV…VFRD).

In terms of assembly, component of the BCR(KBTBD4) E3 ubiquitin ligase complex, at least composed of CUL3, KBTBD4 and RBX1.

Functionally, substrate-specific adapter of a BCR (BTB-CUL3-RBX1) E3 ubiquitin ligase complex which targets CoREST corepressor complex components RCOR1, KDM1A/LSD1 and HDAC2 for proteasomal degradation. RCOR1 is likely to be the primary target while degradation of KDM1A and HDAC2 is likely due to their association with RCOR1. Also targets RCOR3, MIER2 and MIER3 for proteasomal degradation as well as associated proteins ZNF217 and RREB1. Degradation is dependent on the presence of an ELM2 domain in the target proteins. The protein is Kelch repeat and BTB domain-containing protein 4 (KBTBD4) of Homo sapiens (Human).